The following is a 482-amino-acid chain: ATP synthase subunit beta (482 aa).

161–168 (GGAGVGKT) serves as a coordination point for ATP.

Belongs to the ATPase alpha/beta chains family. As to quaternary structure, F-type ATPases have 2 components, CF(1) - the catalytic core - and CF(0) - the membrane proton channel. CF(1) has five subunits: alpha(3), beta(3), gamma(1), delta(1), epsilon(1). CF(0) has three main subunits: a(1), b(2) and c(9-12). The alpha and beta chains form an alternating ring which encloses part of the gamma chain. CF(1) is attached to CF(0) by a central stalk formed by the gamma and epsilon chains, while a peripheral stalk is formed by the delta and b chains.

It localises to the cell inner membrane. The catalysed reaction is ATP + H2O + 4 H(+)(in) = ADP + phosphate + 5 H(+)(out). Produces ATP from ADP in the presence of a proton gradient across the membrane. The catalytic sites are hosted primarily by the beta subunits. This Solibacter usitatus (strain Ellin6076) protein is ATP synthase subunit beta.